We begin with the raw amino-acid sequence, 193 residues long: Cysteine and glycine-rich protein 1 (193 aa).

An LIM zinc-binding 1 domain is found at 10-61; sequence CGVCQKTVYFAEEVQCEGNSFHKSCFLCMVCKKNLDSTTVAVHGEEIYCKSC. The Nuclear localization signal signature appears at 64 to 69; sequence KKYGPK. Phosphoserine is present on Ser-81. Residue Lys-84 is modified to N6-acetyllysine. A Glycyl lysine isopeptide (Lys-Gly) (interchain with G-Cter in SUMO2) cross-link involves residue Lys-91. N6-acetyllysine occurs at positions 112, 131, 137, and 161. Residues 119–170 enclose the LIM zinc-binding 2 domain; that stretch reads CPRCSQAVYAAEKVIGAGKSWHKSCFRCAKCGKGLESTTLADKDGEIYCKGC. Ser-192 is modified (phosphoserine).

As to quaternary structure, interacts with ASCC1; ASCC2 and TRIP4.

The protein localises to the nucleus. Could play a role in neuronal development. The protein is Cysteine and glycine-rich protein 1 (Csrp1) of Rattus norvegicus (Rat).